The primary structure comprises 293 residues: Glutamyl-Q tRNA(Asp) synthetase (293 aa).

L-glutamate contacts are provided by residues 8 to 12 and E44; that span reads RFAPS. Positions 11-21 match the 'HIGH' region motif; it reads PSPSGPLHAGS. 4 residues coordinate Zn(2+): C98, C100, Y120, and C124. Positions 183 and 201 each coordinate L-glutamate. The short motif at 239–243 is the 'KMSKS' region element; sequence KLSKQ. Residue K242 coordinates ATP.

Belongs to the class-I aminoacyl-tRNA synthetase family. GluQ subfamily. Zn(2+) serves as cofactor.

In terms of biological role, catalyzes the tRNA-independent activation of glutamate in presence of ATP and the subsequent transfer of glutamate onto a tRNA(Asp). Glutamate is transferred on the 2-amino-5-(4,5-dihydroxy-2-cyclopenten-1-yl) moiety of the queuosine in the wobble position of the QUC anticodon. In Janthinobacterium sp. (strain Marseille) (Minibacterium massiliensis), this protein is Glutamyl-Q tRNA(Asp) synthetase.